We begin with the raw amino-acid sequence, 3859 residues long: Transformation/transcription domain-associated protein (3859 aa).

A2 bears the N-acetylalanine mark. Pro residues predominate over residues 491–526; the sequence is PAAPGPAPSPAPVPAPPPPPPPPPPATPVTPAPVPP. Residues 491-541 are disordered; sequence PAAPGPAPSPAPVPAPPPPPPPPPPATPVTPAPVPPFEKQGEKDKEDKQTF. Residues 529-539 show a composition bias toward basic and acidic residues; the sequence is KQGEKDKEDKQ. The residue at position 1628 (S1628) is a Phosphoserine. The tract at residues 2010–2388 is interaction with TP53; sequence SEVVIKWELQ…SPMAANQTPT (379 aa). The tract at residues 2023–2044 is disordered; sequence DQQPDSDMDPNSSGEGVNSVSS. Low complexity predominate over residues 2033-2044; that stretch reads NSSGEGVNSVSS. The Bipartite nuclear localization signal signature appears at 2047–2062; that stretch reads KRGLSVDSAQEVKRFR. Phosphoserine occurs at positions 2051 and 2077. K2543 participates in a covalent cross-link: Glycyl lysine isopeptide (Lys-Gly) (interchain with G-Cter in SUMO2). Positions 2543-2554 are enriched in basic and acidic residues; sequence KQEPRERENSES. Residues 2543–2578 are disordered; that stretch reads KQEPRERENSESKEEDVEIDIELAPGDQTSTPKTKE. The 584-residue stretch at 2692 to 3275 folds into the FAT domain; the sequence is VLKYLGKTHN…YFPIRTLYLT (584 aa). K3078 carries the N6-acetyllysine modification. The PI3K/PI4K catalytic domain maps to 3500-3823; sequence MPRVEIVQKH…AVTAIMTRLH (324 aa). The segment at 3506–3512 is G-loop; that stretch reads VQKHNTA. The catalytic loop stretch occupies residues 3687–3695; it reads HLNRLNPEM. Positions 3707–3732 are activation loop; that stretch reads VAYFRFDINDATGDLDANRPVPFRLT. Residues 3827 to 3859 form the FATC domain; it reads QFEGGESKVNTLVAAANSLDNLCRMDPAWHPWL.

It belongs to the PI3/PI4-kinase family. TRA1 subfamily. As to quaternary structure, interacts with MYC, E2F1 and E2F4 transcription factors. Interacts directly with p53/TP53. Interacts with GCN5L2. Component of various HAT complexes. Component of the PCAF complex, at least composed of TADA2L/ADA2, SUPT3H, TADA3L/ADA3, TAF5L/PAF65-beta, TAF6L/PAF65-alpha, TAF10/TAFII30, TAF12/TAFII20, TAF9/TAFII31 and TRRAP. Component of the TFTC-HAT complex, at least composed of TAF5L, TAF6L, TADA3L, SUPT3H/SPT3, TAF2/TAFII150, TAF4/TAFII135, TAF5/TAFII100, GCN5L2/GCN5, TAF10 and TRRAP. Component of the NuA4 histone acetyltransferase complex which contains the catalytic subunit KAT5/TIP60 and the subunits EP400, TRRAP/PAF400, BRD8/SMAP, EPC1, DMAP1/DNMAP1, RUVBL1/TIP49, RUVBL2, ING3, actin, ACTL6A/BAF53A, MORF4L1/MRG15, MORF4L2/MRGX, MRGBP, YEATS4/GAS41, VPS72/YL1 and MEAF6. Component of the STAGA complex, at least composed of SUPT3H, GCN5L2, SUPT7L, TAF5L, TAF6L, TADA3L, TAD1L, TAF10, TAF12, TRRAP and TAF9. The STAGA core complex is associated with a subcomplex required for histone deubiquitination composed of ATXN7L3, ENY2 and USP22. Component of the BAF53 complex, at least composed of BAF53A, RUVBL1, SMARCA4/BRG1, and TRRAP, which preferentially acetylates histone H4 (and H2A) within nucleosomes. Interacts with NPAT. Interaction with TELO2 and TTI1. Component of a SWR1-like complex.

The protein localises to the nucleus. Functionally, adapter protein, which is found in various multiprotein chromatin complexes with histone acetyltransferase activity (HAT), which gives a specific tag for epigenetic transcription activation. Component of the NuA4 histone acetyltransferase complex which is responsible for acetylation of nucleosomal histones H4 and H2A. Plays a central role in MYC transcription activation, and also participates in cell transformation by MYC. Required for p53/TP53-, E2F1- and E2F4-mediated transcription activation. Also involved in transcription activation mediated by the adenovirus E1A, a viral oncoprotein that deregulates transcription of key genes. Probably acts by linking transcription factors such as E1A, MYC or E2F1 to HAT complexes such as STAGA thereby allowing transcription activation. Probably not required in the steps following histone acetylation in processes of transcription activation. May be required for the mitotic checkpoint and normal cell cycle progression. Component of a SWR1-like complex that specifically mediates the removal of histone H2A.Z/H2AZ1 from the nucleosome. May play a role in the formation and maintenance of the auditory system. The protein is Transformation/transcription domain-associated protein (TRRAP) of Homo sapiens (Human).